The following is a 172-amino-acid chain: 3-hydroxydecanoyl-[acyl-carrier-protein] dehydratase (172 aa).

Residue His-71 is part of the active site.

This sequence belongs to the thioester dehydratase family. FabA subfamily. As to quaternary structure, homodimer.

It is found in the cytoplasm. It carries out the reaction a (3R)-hydroxyacyl-[ACP] = a (2E)-enoyl-[ACP] + H2O. The catalysed reaction is (3R)-hydroxydecanoyl-[ACP] = (2E)-decenoyl-[ACP] + H2O. It catalyses the reaction (2E)-decenoyl-[ACP] = (3Z)-decenoyl-[ACP]. It functions in the pathway lipid metabolism; fatty acid biosynthesis. Necessary for the introduction of cis unsaturation into fatty acids. Catalyzes the dehydration of (3R)-3-hydroxydecanoyl-ACP to E-(2)-decenoyl-ACP and then its isomerization to Z-(3)-decenoyl-ACP. Can catalyze the dehydratase reaction for beta-hydroxyacyl-ACPs with saturated chain lengths up to 16:0, being most active on intermediate chain length. The sequence is that of 3-hydroxydecanoyl-[acyl-carrier-protein] dehydratase from Escherichia coli O139:H28 (strain E24377A / ETEC).